The chain runs to 697 residues: Elongation factor G (697 aa).

The 276-residue stretch at 8 to 283 (ERMRNIGIAA…AVVDYLPSPL (276 aa)) folds into the tr-type G domain. GTP-binding positions include 17 to 24 (AHIDAGKT), 81 to 85 (DTPGH), and 135 to 138 (NKMD).

This sequence belongs to the TRAFAC class translation factor GTPase superfamily. Classic translation factor GTPase family. EF-G/EF-2 subfamily.

Its subcellular location is the cytoplasm. In terms of biological role, catalyzes the GTP-dependent ribosomal translocation step during translation elongation. During this step, the ribosome changes from the pre-translocational (PRE) to the post-translocational (POST) state as the newly formed A-site-bound peptidyl-tRNA and P-site-bound deacylated tRNA move to the P and E sites, respectively. Catalyzes the coordinated movement of the two tRNA molecules, the mRNA and conformational changes in the ribosome. The sequence is that of Elongation factor G from Solibacter usitatus (strain Ellin6076).